The chain runs to 553 residues: Solute carrier family 22 member 2 (553 aa).

Over 1–21 (MPTVDDILEHIGEFHLFQKQT) the chain is Cytoplasmic. A helical transmembrane segment spans residues 22-42 (FFLLALLSGAFTPIYVGIVFL). At 43 to 150 (GFTPNHHCRS…LVCAHSWMLD (108 aa)) the chain is on the extracellular side. N-linked (GlcNAc...) asparagine glycosylation occurs at Asn-71. A helical transmembrane segment spans residues 151-171 (LFQSLVNVGFFIGAVGIGYLA). The Cytoplasmic portion of the chain corresponds to 172–177 (DRFGRK). Residues 178–198 (FCLLVTILINAISGVLMAISP) traverse the membrane as a helical segment. Residues 199-210 (NYAWMLVFRFLQ) are Extracellular-facing. A helical transmembrane segment spans residues 211–231 (GLVSKAGWLIGYILITEFVGL). At 232-238 (GYRRTVG) the chain is on the cytoplasmic side. Residues 239–259 (ICYQIAFTVGLLILAGVAYAL) form a helical membrane-spanning segment. Over 260-263 (PNWR) the chain is Extracellular. Residues 264 to 284 (WLQFAVTLPNFCFLLYFWCIP) form a helical membrane-spanning segment. Positions 284–288 (PESPR) match the Proline-rich sequence motif. The Cytoplasmic portion of the chain corresponds to 285–348 (ESPRWLISQN…VRTPQIRKHT (64 aa)). A helical transmembrane segment spans residues 349 to 369 (LILMYNWFTSSVLYQGLIMHM). The Extracellular portion of the chain corresponds to 370 to 375 (GLAGDN). A helical membrane pass occupies residues 376–396 (IYLDFFYSALVEFPAAFIIIL). Topologically, residues 397–404 (TIDRIGRR) are cytoplasmic. The chain crosses the membrane as a helical span at residues 405-425 (YPWAVSNMVAGAACLASVFIP). Residues 426–432 (DDLQWLK) are Extracellular-facing. The helical transmembrane segment at 433–453 (ITVACLGRMGITIAYEMVCLV) threads the bilayer. The Cytoplasmic portion of the chain corresponds to 454 to 464 (NAELYPTYIRN). The helical transmembrane segment at 465–485 (LAVLVCSSMCDIGGIVTPFLV) threads the bilayer. At 486–494 (YRLTDIWLE) the chain is on the extracellular side. The chain crosses the membrane as a helical span at residues 495 to 515 (FPLVVFAVVGLVAGGLVLLLP). Over 516–553 (ETKGKALPETIEDAEKMQRPRKKKEKRIYLQVKKAELS) the chain is Cytoplasmic.

Belongs to the major facilitator (TC 2.A.1) superfamily. Organic cation transporter (TC 2.A.1.19) family. In terms of processing, tyrosine phosphorylated by tyrosine-protein kinase YES1. As to expression, expressed in kidney and ureter. To a lower extent, also expressed in brain and embryo.

It is found in the basolateral cell membrane. The protein localises to the basal cell membrane. The protein resides in the apical cell membrane. The catalysed reaction is (R)-noradrenaline(out) = (R)-noradrenaline(in). The enzyme catalyses (R)-adrenaline(out) = (R)-adrenaline(in). It carries out the reaction serotonin(out) = serotonin(in). It catalyses the reaction dopamine(out) = dopamine(in). The catalysed reaction is histamine(out) = histamine(in). The enzyme catalyses thiamine(in) = thiamine(out). It carries out the reaction creatinine(in) = creatinine(out). It catalyses the reaction 1-methylnicotinamide(out) = 1-methylnicotinamide(in). The catalysed reaction is guanidine(out) = guanidine(in). The enzyme catalyses choline(out) = choline(in). It carries out the reaction agmatine(out) = agmatine(in). It catalyses the reaction putrescine(out) = putrescine(in). The catalysed reaction is spermidine(in) = spermidine(out). The enzyme catalyses tyramine(in) = tyramine(out). It carries out the reaction L-histidyl-L-proline diketopiperazine(in) = L-histidyl-L-proline diketopiperazine(out). It catalyses the reaction (R)-salsolinol(in) = (R)-salsolinol(out). The catalysed reaction is N-methyl-(R)-salsolinol(in) = N-methyl-(R)-salsolinol(out). The enzyme catalyses acetylcholine(in) = acetylcholine(out). It carries out the reaction prostaglandin F2alpha(out) = prostaglandin F2alpha(in). It catalyses the reaction prostaglandin E2(out) = prostaglandin E2(in). Tyrosine phosphorylation of the transporter leads to activation of the transport activity. TEA uptake is activated by tyrosine phosphorylation. Inhibited by cGMP, most likely through a cGMP-binding protein that interacts with OCT2. In terms of biological role, electrogenic voltage-dependent transporter that mediates the transport of a variety of organic cations such as endogenous bioactive amines, cationic drugs and xenobiotics. Functions as a Na(+)-independent, bidirectional uniporter. Cation cellular uptake or release is driven by the electrochemical potential, i.e. membrane potential and concentration gradient. However, may also engage electroneutral cation exchange when saturating concentrations of cation substrates are reached. Predominantly expressed at the basolateral membrane of hepatocytes and proximal tubules and involved in the uptake and disposition of cationic compounds by hepatic and renal clearance from the blood flow. Implicated in monoamine neurotransmitters uptake such as histamine, dopamine, adrenaline/epinephrine, noradrenaline/norepinephrine, serotonin and tyramine, thereby supporting a physiological role in the central nervous system by regulating interstitial concentrations of neurotransmitters. Also capable of transporting dopaminergic neuromodulators cyclo(his-pro), salsolinol and N-methyl-salsolinol, thereby involved in the maintenance of dopaminergic cell integrity in the central nervous system. Mediates the bidirectional transport of acetylcholine (ACh) at the apical membrane of ciliated cell in airway epithelium, thereby playing a role in luminal release of ACh from bronchial epithelium. Also transports guanidine and endogenous monoamines such as vitamin B1/thiamine, creatinine and N-1-methylnicotinamide (NMN). Mediates the uptake and efflux of quaternary ammonium compound choline. Mediates the bidirectional transport of polyamine agmatine and the uptake of polyamines putrescine and spermidine. Able to transport non-amine endogenous compounds such as prostaglandin E2 (PGE2) and prostaglandin F2-alpha (PGF2-alpha). Also involved in the uptake of xenobiotic 4-(4-(dimethylamino)styryl)-N-methylpyridinium (ASP). May contribute to regulate the transport of organic compounds in testis across the blood-testis-barrier. This Mus musculus (Mouse) protein is Solute carrier family 22 member 2.